The chain runs to 176 residues: Peptidyl-prolyl cis-trans isomerase cyp5 (176 aa).

A PPIase cyclophilin-type domain is found at 10 to 173; that stretch reads FFDVAVNGKP…AKVEIVDCGE (164 aa).

The protein belongs to the cyclophilin-type PPIase family.

It catalyses the reaction [protein]-peptidylproline (omega=180) = [protein]-peptidylproline (omega=0). Its function is as follows. PPIases accelerate the folding of proteins. It catalyzes the cis-trans isomerization of proline imidic peptide bonds in oligopeptides. The protein is Peptidyl-prolyl cis-trans isomerase cyp5 (cyp5) of Rhizopus delemar (strain RA 99-880 / ATCC MYA-4621 / FGSC 9543 / NRRL 43880) (Mucormycosis agent).